Here is a 205-residue protein sequence, read N- to C-terminus: MLEVSNLTAIRDERVLFENLQFEIKPGELVQIEGRNGTGKTTLLRIVTGLGDRDEGAIKWKGEAIEKSRDQFHQDLLFLGHQTGVKRELTAFENLRFYQSIHNSDSSSERIFHALTQVGLAGREDVPVAQLSAGQQRRVALARLWLSHQILWILDEPLTAIDKQGVKVLESLFSNHVDNGGIVILTTHQDMFTDSPKLRKIKLGD.

The ABC transporter domain maps to 2 to 204 (LEVSNLTAIR…SPKLRKIKLG (203 aa)). Position 34–41 (34–41 (GRNGTGKT)) interacts with ATP.

The protein belongs to the ABC transporter superfamily. CcmA exporter (TC 3.A.1.107) family. The complex is composed of two ATP-binding proteins (CcmA) and two transmembrane proteins (CcmB).

The protein resides in the cell inner membrane. The enzyme catalyses heme b(in) + ATP + H2O = heme b(out) + ADP + phosphate + H(+). Part of the ABC transporter complex CcmAB involved in the biogenesis of c-type cytochromes; once thought to export heme, this seems not to be the case, but its exact role is uncertain. Responsible for energy coupling to the transport system. This chain is Cytochrome c biogenesis ATP-binding export protein CcmA, found in Vibrio vulnificus (strain CMCP6).